The primary structure comprises 684 residues: Glycine--tRNA ligase beta subunit (684 aa).

It belongs to the class-II aminoacyl-tRNA synthetase family. In terms of assembly, tetramer of two alpha and two beta subunits.

It is found in the cytoplasm. It catalyses the reaction tRNA(Gly) + glycine + ATP = glycyl-tRNA(Gly) + AMP + diphosphate. This chain is Glycine--tRNA ligase beta subunit, found in Pseudomonas syringae pv. syringae (strain B728a).